An 875-amino-acid chain; its full sequence is Ubiquitin-protein ligase E3A (875 aa).

Residues 44–83 (CGNEACTNEFCASCPTFLRMDNNAAAIKALELYKINAKLC) form a C4-type; atypical zinc finger. The segment covering 175 to 186 (KEELKSLQAKDE) has biased composition (basic and acidic residues). The segment at 175 to 226 (KEELKSLQAKDEDKDEDEKEKAACSAAAMEEDSEASSSRIGDSSQGDNNLQK) is disordered. Polar residues predominate over residues 213–225 (RIGDSSQGDNNLQ). Residue serine 218 is modified to Phosphoserine. The tract at residues 401 to 418 (IPESSELTLQELLGEERR) is E6-binding. Residues 418–517 (RNKKGPRVDP…TVLYSLVQGQ (100 aa)) are interaction with HCV core protein. Tyrosine 659 carries the phosphotyrosine; by ABL1 modification. The HECT domain maps to 776 to 875 (YDGGYTRDSV…ITYAKGFGML (100 aa)). Cysteine 843 serves as the catalytic Glycyl thioester intermediate.

As to quaternary structure, the active form is probably a homotrimer. Binds UBQLN1 and UBQLN2. Interacts with the 26S proteasome. Interacts with BPY2. Interacts with HIF1AN, MAPK6 and NEURL4; interaction with MAPK6 may be mediated by NEURL4. Interacts with the proteasomal subunit PSMD4. Interacts with ESR1 and WBP2. Interacts with BMAL1. Interacts with ARC. (Microbial infection) Interacts with HCV core protein and targets it to degradation. In terms of assembly, (Microbial infection) Interacts with the E6 protein of the cancer-associated human papillomavirus types 16 and 18. The E6/E6-AP complex binds to and targets the p53/TP53 tumor-suppressor protein for ubiquitin-mediated proteolysis. Post-translationally, phosphorylation at Tyr-659 by ABL1 impairs E3 ligase activity and protects p53/TP53 from degradation in (HPV)-infected cells.

The protein resides in the cytoplasm. It localises to the nucleus. It carries out the reaction S-ubiquitinyl-[E2 ubiquitin-conjugating enzyme]-L-cysteine + [acceptor protein]-L-lysine = [E2 ubiquitin-conjugating enzyme]-L-cysteine + N(6)-ubiquitinyl-[acceptor protein]-L-lysine.. The protein operates within protein modification; protein ubiquitination. In terms of biological role, E3 ubiquitin-protein ligase which accepts ubiquitin from an E2 ubiquitin-conjugating enzyme in the form of a thioester and transfers it to its substrates. Several substrates have been identified including the BMAL1, ARC, LAMTOR1, RAD23A and RAD23B, MCM7 (which is involved in DNA replication), annexin A1, the PML tumor suppressor, and the cell cycle regulator CDKN1B. Additionally, may function as a cellular quality control ubiquitin ligase by helping the degradation of the cytoplasmic misfolded proteins. Finally, UBE3A also promotes its own degradation in vivo. Plays an important role in the regulation of the circadian clock: involved in the ubiquitination of the core clock component BMAL1, leading to its proteasomal degradation. Acts as transcriptional coactivator of progesterone receptor PGR upon progesterone hormone activation. Acts as a regulator of synaptic development by mediating ubiquitination and degradation of ARC. Required for synaptic remodeling in neurons by mediating ubiquitination and degradation of LAMTOR1, thereby limiting mTORC1 signaling and activity-dependent synaptic remodeling. Synergizes with WBP2 in enhancing PGR activity. Functionally, (Microbial infection) Catalyzes the high-risk human papilloma virus E6-mediated ubiquitination of p53/TP53, contributing to the neoplastic progression of cells infected by these viruses. The protein is Ubiquitin-protein ligase E3A of Homo sapiens (Human).